A 122-amino-acid polypeptide reads, in one-letter code: Large ribosomal subunit protein uL18 (122 aa).

Belongs to the universal ribosomal protein uL18 family. As to quaternary structure, part of the 50S ribosomal subunit; part of the 5S rRNA/L5/L18/L25 subcomplex. Contacts the 5S and 23S rRNAs.

This is one of the proteins that bind and probably mediate the attachment of the 5S RNA into the large ribosomal subunit, where it forms part of the central protuberance. This chain is Large ribosomal subunit protein uL18, found in Thermosipho melanesiensis (strain DSM 12029 / CIP 104789 / BI429).